The following is a 444-amino-acid chain: Probable ribonuclease FAU-1 (444 aa).

It belongs to the FAU-1 family.

Its function is as follows. Probable RNase involved in rRNA stability through maturation and/or degradation of precursor rRNAs. Binds to RNA in loop regions with AU-rich sequences. In Pyrobaculum arsenaticum (strain DSM 13514 / JCM 11321 / PZ6), this protein is Probable ribonuclease FAU-1.